The following is a 649-amino-acid chain: MALVTVSRSPPASGHSTPVGPTQDRVVRRRGRLQRRQSFAVLRGAVLGLQDGGDSNVASEADSEPMEEPSGEEQPTEDQTDKGQGLQSPWKQVQKRHLHLMVELLRPQDDIRLAAQLEAARPPRLRYLLVVSTGEELSEEAILLGVDFPDSSSHSCTLGLVLPLWSDTQVYLDGDGGFSVTSGGQSRIFKPVSIQTMWATLQVLHQACEVALGSGLVPGGSALAWATYYQEKLNSDQGCLNEWMAMSDLESFRPPNAEPGQASEQEKMEQAILAELWQVLDTSDLDSVTSKEIRQALELRLGCPLQQYRDFIDNQMLLLMAQQDRASRIFPHLYLGSEWNAANLEELQKNRVSHILNMAREIDNFFPERFTYYNVRVWDEESAQLLPHWKETHRFIEDARAQGTRVLVHCKMGVSRSAATVLAYAMKQYGWDLEQALIHVQELRPIVRPNHGFLRQLRTYQGILTASRQSHVWEQKVGVVSPEEPLAPEVSTPLPPLPPEPGGSGEVMVMGLEGSQETPKEELGLRPRINLRGVMRSISLLEPSESESTPEAGGLPEVFSSDEEPLHPFSQLSRAKGGQRVRKGPWPALKSRQSVVALHSAALVASRTRAFQEQGQGQEQSEPGMSSTPRLRKVMRQASVDDSREEDKA.

Polar residues predominate over residues 1-20 (MALVTVSRSPPASGHSTPVG). Residues 1–32 (MALVTVSRSPPASGHSTPVGPTQDRVVRRRGR) are disordered. Alanine 2 is subject to N-acetylalanine. Phosphoserine occurs at positions 9 and 38. The tract at residues 49–90 (LQDGGDSNVASEADSEPMEEPSGEEQPTEDQTDKGQGLQSPW) is disordered. Residues 61–78 (ADSEPMEEPSGEEQPTED) are compositionally biased toward acidic residues. At serine 88 the chain carries Phosphoserine. One can recognise a DEK-C domain in the interval 266–321 (EKMEQAILAELWQVLDTSDLDSVTSKEIRQALELRLGCPLQQYRDFIDNQMLLLMA). Positions 325 to 466 (RASRIFPHLY…LRTYQGILTA (142 aa)) constitute a Tyrosine-protein phosphatase domain. Catalysis depends on cysteine 410, which acts as the Phosphocysteine intermediate. Composition is skewed to low complexity over residues 541–551 (LEPSESESTPE) and 608–627 (TRAFQEQGQGQEQSEPGMSS). Disordered stretches follow at residues 541–586 (LEPS…KGPW) and 608–649 (TRAF…EDKA). Positions 639–649 (SVDDSREEDKA) are enriched in basic and acidic residues.

It belongs to the protein-tyrosine phosphatase family. In terms of assembly, does not bind to, or colocalize with, filamentous actin. Expressed in brain, small intestine and testis. Also expressed at lower levels in heart, kidney, liver, spleen and thymus.

It localises to the cytoplasm. It is found in the cytoskeleton. The protein resides in the nucleus. It catalyses the reaction O-phospho-L-tyrosyl-[protein] + H2O = L-tyrosyl-[protein] + phosphate. The enzyme catalyses O-phospho-L-seryl-[protein] + H2O = L-seryl-[protein] + phosphate. It carries out the reaction O-phospho-L-threonyl-[protein] + H2O = L-threonyl-[protein] + phosphate. Functionally, protein phosphatase which may play a role in the regulation of actin filament dynamics. Can dephosphorylate and activate the actin binding/depolymerizing factor cofilin, which subsequently binds to actin filaments and stimulates their disassembly. This chain is Protein phosphatase Slingshot homolog 3 (Ssh3), found in Mus musculus (Mouse).